The sequence spans 232 residues: Large ribosomal subunit protein uL1 (232 aa).

It belongs to the universal ribosomal protein uL1 family. Part of the 50S ribosomal subunit.

Functionally, binds directly to 23S rRNA. The L1 stalk is quite mobile in the ribosome, and is involved in E site tRNA release. Its function is as follows. Protein L1 is also a translational repressor protein, it controls the translation of the L11 operon by binding to its mRNA. The protein is Large ribosomal subunit protein uL1 of Burkholderia lata (strain ATCC 17760 / DSM 23089 / LMG 22485 / NCIMB 9086 / R18194 / 383).